A 100-amino-acid chain; its full sequence is MLKMNLQLFAHKKGVGSSKNGRDSEAKRLGVKCADGQFVLAGNILVRQRGTKIHPGANVGKGGDDTLFAKIDGVVKYERLGRDKKKASVYPVNVEEVIAE.

A propeptide spanning residues 1–9 is cleaved from the precursor; that stretch reads MLKMNLQLF.

The protein belongs to the bacterial ribosomal protein bL27 family. In terms of processing, the N-terminus is cleaved by ribosomal processing cysteine protease Prp.

In Clostridium perfringens (strain ATCC 13124 / DSM 756 / JCM 1290 / NCIMB 6125 / NCTC 8237 / Type A), this protein is Large ribosomal subunit protein bL27.